Consider the following 511-residue polypeptide: Glucan endo-1,3-beta-glucosidase 1 (511 aa).

Residues 1-28 (MAFTSMVSTVPVLFFFFTLLLISANSSS) form the signal peptide. Residue asparagine 109 is glycosylated (N-linked (GlcNAc...) asparagine). Glutamate 137 serves as the catalytic Proton donor. N-linked (GlcNAc...) asparagine glycans are attached at residues asparagine 192 and asparagine 274. The Nucleophile role is filled by glutamate 284. Residues asparagine 374, asparagine 378, asparagine 407, asparagine 473, and asparagine 480 are each glycosylated (N-linked (GlcNAc...) asparagine). Residues cysteine 382 and cysteine 445 are joined by a disulfide bond. Residue alanine 485 is the site of GPI-anchor amidated alanine attachment. Positions 486-511 (AGEATSRSLSRGFCVTIMILVTFSIL) are cleaved as a propeptide — removed in mature form.

The protein belongs to the glycosyl hydrolase 17 family. Contains two additional disulfide bonds.

The protein resides in the cell membrane. The catalysed reaction is Hydrolysis of (1-&gt;3)-beta-D-glucosidic linkages in (1-&gt;3)-beta-D-glucans.. The protein is Glucan endo-1,3-beta-glucosidase 1 of Arabidopsis thaliana (Mouse-ear cress).